The following is a 322-amino-acid chain: Cyanophycinase (322 aa).

Active-site charge relay system residues include S178, E196, and H220.

Belongs to the peptidase S51 family.

It carries out the reaction [L-4-(L-arginin-2-N-yl)aspartate](n) + H2O = [L-4-(L-arginin-2-N-yl)aspartate](n-1) + L-4-(L-arginin-2-N-yl)aspartate. Functionally, exopeptidase that catalyzes the hydrolytic cleavage of multi-L-arginyl-poly-L-aspartic acid (cyanophycin; a water-insoluble reserve polymer) into aspartate-arginine dipeptides. The protein is Cyanophycinase (cphB) of Synechococcus elongatus.